The chain runs to 722 residues: Probable acyl-activating enzyme 16, chloroplastic (722 aa).

Residues 1-47 (MASTSLGASILVSHCSSAPEFQVSGMRLVFGYKAFGCRTSRRGFRVR) constitute a chloroplast transit peptide.

It belongs to the ATP-dependent AMP-binding enzyme family.

It localises to the plastid. The protein localises to the chloroplast. In terms of biological role, may be involved in the activation of fatty acids to acyl-carrier-protein. The protein is Probable acyl-activating enzyme 16, chloroplastic (AAE16) of Arabidopsis thaliana (Mouse-ear cress).